Consider the following 170-residue polypeptide: Photosystem I assembly protein Ycf3 (170 aa).

3 TPR repeats span residues 35-68, 72-105, and 120-153; these read AFTY…EIDP, SYIL…NPFL, and GEQA…TPGN.

Belongs to the Ycf3 family.

Its subcellular location is the plastid. The protein resides in the chloroplast thylakoid membrane. Functionally, essential for the assembly of the photosystem I (PSI) complex. May act as a chaperone-like factor to guide the assembly of the PSI subunits. The sequence is that of Photosystem I assembly protein Ycf3 from Saccharum officinarum (Sugarcane).